A 257-amino-acid polypeptide reads, in one-letter code: MEQRLEIEQFICRSDNYGVLIHDPESALTATIDAPDAYAIEAALERRGWTLDFIFTTHHHLDHVEGNEPLKEKFGVSIIGPEAEKAKIPGIDRTVKGGDEFTFGLFKVKVISTPGHTAGGISYYLPDAKVVFTGDTLFALGCGRLFEGTPATMFHSLEKLVALPGDTALYCGHEYTQNNARFALTIDPDNSALKERAKEIARLRAHERMTLPSTIALEMATNPFLRWHDRTIRARLGLQDAPDEAVFAEIRKRKDMF.

Positions 58, 60, 62, 63, 116, 135, and 173 each coordinate Zn(2+).

It belongs to the metallo-beta-lactamase superfamily. Glyoxalase II family. Monomer. It depends on Zn(2+) as a cofactor.

The catalysed reaction is an S-(2-hydroxyacyl)glutathione + H2O = a 2-hydroxy carboxylate + glutathione + H(+). The protein operates within secondary metabolite metabolism; methylglyoxal degradation; (R)-lactate from methylglyoxal: step 2/2. Functionally, thiolesterase that catalyzes the hydrolysis of S-D-lactoyl-glutathione to form glutathione and D-lactic acid. This chain is Hydroxyacylglutathione hydrolase, found in Brucella melitensis biotype 1 (strain ATCC 23456 / CCUG 17765 / NCTC 10094 / 16M).